The primary structure comprises 487 residues: Histamine H1 receptor (487 aa).

The Extracellular portion of the chain corresponds to 1–29 (MSLPNSSCLLEDKMCEGNKTTMASPQLMP). N-linked (GlcNAc...) asparagine glycosylation is found at asparagine 5 and asparagine 18. The helical transmembrane segment at 30-50 (LVVVLSTICLVTVGLNLLVLY) threads the bilayer. Over 51–64 (AVRSERKLHTVGNL) the chain is Cytoplasmic. A helical transmembrane segment spans residues 65-89 (YIVSLSVADLIVGAVVMPMNILYLL). Residues 90 to 97 (MSKWSLGR) are Extracellular-facing. A helical transmembrane segment spans residues 98-123 (PLCLFWLSMDYVASTASIFSVFILCI). A disulfide bridge links cysteine 100 with cysteine 180. Residues aspartate 107 and threonine 112 each contribute to the histamine site. Residues 107 to 112 (DYVAST) form an important for agonist binding region. Residues 124 to 144 (DRYRSVQQPLRYLKYRTKTRA) lie on the Cytoplasmic side of the membrane. 2 positions are modified to phosphothreonine: threonine 140 and threonine 142. Residues 145-164 (SATILGAWFLSFLWVIPILG) form a helical membrane-spanning segment. Topologically, residues 165–188 (WNHFMQQTSVRREDKCETDFYDVT) are extracellular. Residues 189 to 211 (WFKVMTAIINFYLPTLLMLWFYA) traverse the membrane as a helical segment. A histamine-binding site is contributed by asparagine 198. Topologically, residues 212-416 (KIYKAVRQHC…MNRERKAAKQ (205 aa)) are cytoplasmic. Serine 230 bears the Phosphoserine mark. A compositionally biased stretch (basic and acidic residues) spans 238-261 (KLRPENPKGDAKKPGKESPWEVLK). The disordered stretch occupies residues 238 to 292 (KLRPENPKGDAKKPGKESPWEVLKRKPKDAGGGSVLKSPSQTXKEMKSPVVFSQE). A Phosphothreonine modification is found at threonine 279. A phosphoserine mark is found at serine 344 and serine 347. A disordered region spans residues 345 to 379 (EISEDQMLGDSQSFSRTDSDTTTETAPGKGKLRSG). A compositionally biased stretch (polar residues) spans 353 to 369 (GDSQSFSRTDSDTTTET). Serine 380, serine 396, and serine 398 each carry phosphoserine. Residues 417-440 (LGFIMAAFILCWIPYFIFFMVIAF) traverse the membrane as a helical segment. The interval 424–428 (FILCW) is important for agonist binding. Residue tyrosine 431 participates in histamine binding. Residues cysteine 441 and cysteine 444 are joined by a disulfide bond. The Extracellular portion of the chain corresponds to 441 to 446 (CKNCCN). Residues 447–469 (EHLHMFTIWLGYINSTLNPLIYP) form a helical membrane-spanning segment. Residues 470 to 487 (LCNENFKKTFKRILHIRS) lie on the Cytoplasmic side of the membrane.

Belongs to the G-protein coupled receptor 1 family. Phosphorylation at sites in the second and third cytoplasmic loops independently contribute to agonist-induced receptor down-regulation.

Its subcellular location is the cell membrane. G-protein-coupled receptor for histamine, a biogenic amine that functions as an immune modulator and a neurotransmitter. Through the H1 receptor, histamine mediates the contraction of smooth muscles and increases capillary permeability due to contraction of terminal venules. Also mediates neurotransmission in the central nervous system and thereby regulates circadian rhythms, emotional and locomotor activities as well as cognitive functions. In Pan troglodytes (Chimpanzee), this protein is Histamine H1 receptor.